Reading from the N-terminus, the 245-residue chain is Eukaryotic translation initiation factor 3 subunit K (245 aa).

One can recognise a PCI domain in the interval 46-227; it reads YDCYANLALL…EAKGTVVREN (182 aa).

This sequence belongs to the eIF-3 subunit K family. In terms of assembly, component of the eukaryotic translation initiation factor 3 (eIF-3) complex.

Its subcellular location is the cytoplasm. Its function is as follows. Component of the eukaryotic translation initiation factor 3 (eIF-3) complex, which is involved in protein synthesis of a specialized repertoire of mRNAs and, together with other initiation factors, stimulates binding of mRNA and methionyl-tRNAi to the 40S ribosome. The eIF-3 complex specifically targets and initiates translation of a subset of mRNAs involved in cell proliferation. The sequence is that of Eukaryotic translation initiation factor 3 subunit K from Botryotinia fuckeliana (strain B05.10) (Noble rot fungus).